Consider the following 144-residue polypeptide: Ribosomal RNA large subunit methyltransferase H (144 aa).

S-adenosyl-L-methionine-binding positions include leucine 63, glycine 92, and 111-116; that span reads LSPMTF.

Belongs to the RNA methyltransferase RlmH family. In terms of assembly, homodimer.

The protein localises to the cytoplasm. The catalysed reaction is pseudouridine(1915) in 23S rRNA + S-adenosyl-L-methionine = N(3)-methylpseudouridine(1915) in 23S rRNA + S-adenosyl-L-homocysteine + H(+). Functionally, specifically methylates the pseudouridine at position 1915 (m3Psi1915) in 23S rRNA. The protein is Ribosomal RNA large subunit methyltransferase H of Synechococcus sp. (strain CC9605).